Here is a 371-residue protein sequence, read N- to C-terminus: ADP-ribosylarginine hydrolase Tri1 (371 aa).

The N-terminal extension stretch occupies residues 1–61 (MIDLRSPNAL…LQSRACTLTP (61 aa)). Positions 70-362 (GALLGLAIGD…LFDRAPQVDE (293 aa)) are ADP-ribosyl hydrolase domain. Residues T112, D113, D114, D157, and D313 each coordinate Mg(2+).

It belongs to the ADP-ribosylglycohydrolase family. Requires Mg(2+) as cofactor.

The catalysed reaction is N(omega)-(ADP-D-ribosyl)-L-arginyl-[protein] + H2O = ADP-D-ribose + L-arginyl-[protein]. Functionally, immunity component of an interbacterial competition system (also called effector-immunity systems). Expression in E.coli neutralizes the toxic effects of non-cognate S.proteamaculans effector protein Tre1 (Tre1-Sp); cannot be co-purified with Tre1-Sp from E.coli, suggesting they do not form a stable complex. Probably acts as an arginine mono-ADP-ribosylhydrolase, mediating the removal of mono-ADP-ribose attached to arginine residues on proteins. Probably de-ADP-ribosylates FtsZ and possibly other proteins; the ability to hydrolyze ADP-ribosyl moieties is not essential for neutralization of its cognate toxin, strongly suggesting its N-terminal extension occludes the active site of cognate toxin Tre1. The chain is ADP-ribosylarginine hydrolase Tri1 from Pseudomonas putida (strain GB-1).